The following is a 310-amino-acid chain: MVATRGRPCPTNFSRPQRPRVAGNGTKSQRCRGRLTTSMLGVAPEAKGPPVKVHHLNCGTMNAFGIALLCHVLLVETDDGLVLVDTGFGIQDCLDPGRVGLFRHVLRPAFLQAETAARQIEQLGYRTSDVRHIVLTHFDFDHIGGIADFPEAHLHVTAAEARGAIHAPSLRERLRYRRGQWAHGPKLVEHGPDGEPWRGFASAKPLDSIGTGVVLVPMPGHTRGHAAVAVDAGHRWVLHCGDAFYHRGTLDGRFRVPFVMRAEEKLLSYNRNQLRDNQARIVELHRRHDPDLLIVCAHDPDLYQLARDTA.

The tract at residues 1–29 (MVATRGRPCPTNFSRPQRPRVAGNGTKSQ) is disordered. Zn(2+) is bound by residues histidine 137, aspartate 139, aspartate 141, histidine 142, histidine 221, aspartate 242, and histidine 288.

This sequence belongs to the metallo-beta-lactamase superfamily. Zn(2+) is required as a cofactor.

This chain is Probable metallo-hydrolase Mb2322c, found in Mycobacterium bovis (strain ATCC BAA-935 / AF2122/97).